A 72-amino-acid chain; its full sequence is DNA-directed RNA polymerase subunit omega (72 aa).

This sequence belongs to the RNA polymerase subunit omega family. The RNAP catalytic core consists of 2 alpha, 1 beta, 1 beta' and 1 omega subunit. When a sigma factor is associated with the core the holoenzyme is formed, which can initiate transcription.

It catalyses the reaction RNA(n) + a ribonucleoside 5'-triphosphate = RNA(n+1) + diphosphate. Promotes RNA polymerase assembly. Latches the N- and C-terminal regions of the beta' subunit thereby facilitating its interaction with the beta and alpha subunits. The sequence is that of DNA-directed RNA polymerase subunit omega from Clostridium acetobutylicum (strain ATCC 824 / DSM 792 / JCM 1419 / IAM 19013 / LMG 5710 / NBRC 13948 / NRRL B-527 / VKM B-1787 / 2291 / W).